The following is a 262-amino-acid chain: Glutamate racemase (262 aa).

Substrate is bound by residues 10–11 (DS) and 42–43 (FG). Catalysis depends on cysteine 74, which acts as the Proton donor/acceptor. Position 75–76 (75–76 (NT)) interacts with substrate. Catalysis depends on cysteine 189, which acts as the Proton donor/acceptor. Position 190-191 (190-191 (TH)) interacts with substrate.

Belongs to the aspartate/glutamate racemases family.

The catalysed reaction is L-glutamate = D-glutamate. Its pathway is cell wall biogenesis; peptidoglycan biosynthesis. Provides the (R)-glutamate required for cell wall biosynthesis. This Mesorhizobium japonicum (strain LMG 29417 / CECT 9101 / MAFF 303099) (Mesorhizobium loti (strain MAFF 303099)) protein is Glutamate racemase.